The primary structure comprises 102 residues: Small ribosomal subunit protein uS10 (102 aa).

A disordered region spans residues 34–58 (LSGPVPLPTKTLEIPARKSPDGEGT).

This sequence belongs to the universal ribosomal protein uS10 family. In terms of assembly, part of the 30S ribosomal subunit.

Functionally, involved in the binding of tRNA to the ribosomes. This is Small ribosomal subunit protein uS10 from Natronomonas pharaonis (strain ATCC 35678 / DSM 2160 / CIP 103997 / JCM 8858 / NBRC 14720 / NCIMB 2260 / Gabara) (Halobacterium pharaonis).